The following is a 164-amino-acid chain: UPF0251 protein MM_1448 (164 aa).

Over residues 91-100 the composition is skewed to basic and acidic residues; the sequence is GDYRMPRGDR. Residues 91–123 are disordered; sequence GDYRMPRGDRTGPAGQGPAGGGRGRGQGKGRGG. A compositionally biased stretch (gly residues) spans 104–115; the sequence is AGQGPAGGGRGR.

This sequence belongs to the UPF0251 family.

In Methanosarcina mazei (strain ATCC BAA-159 / DSM 3647 / Goe1 / Go1 / JCM 11833 / OCM 88) (Methanosarcina frisia), this protein is UPF0251 protein MM_1448.